The following is a 3508-amino-acid chain: WD repeat and FYVE domain-containing protein 3 (3508 aa).

A phosphoserine mark is found at S1942 and S2277. Disordered regions lie at residues 2279–2303 (FGLS…SPSP) and 2441–2504 (SSEG…EKTD). Positions 2284 to 2963 (LTGSRRNRKE…PHPPKRVRSR (680 aa)) are sufficient for translocalization to p62 bodies/ALIS. Over residues 2450 to 2459 (EPEHGEDTIA) the composition is skewed to basic and acidic residues. A Phosphoserine modification is found at S2474. The BEACH-type PH domain maps to 2513-2638 (EEGEKIQHMY…IRNKVYQRFL (126 aa)). Residues 2568–3508 (MHEPIIPRGA…RGAEDGPRNC (941 aa)) form an interaction with SQSTM1 region. A BEACH domain is found at 2665–2958 (GLLSTLVGEK…QLFKKPHPPK (294 aa)). The tract at residues 2963–3508 (RLNGDNIGIS…RGAEDGPRNC (546 aa)) is interaction with ATG5. WD repeat units lie at residues 3059–3097 (SEWG…EKAK), 3107–3146 (GHTD…FLTQ), 3149–3188 (GHRA…VSVN), and 3192–3236 (GRSQ…VPET). The tract at residues 3254 to 3317 (AQIGQQAQDD…SGSDDSRRWS (64 aa)) is disordered. Acidic residues predominate over residues 3261–3272 (QDDDSSDSETEE). A phosphoserine mark is found at S3317 and S3321. An LIR motif is present at residues 3326–3331 (DGFIFV). A WD 5 repeat occupies 3390–3429 (THPAEVTALGVSKDHSRILVGDSRGRVFSWSVSDQPGRSA). An FYVE-type zinc finger spans residues 3436 to 3496 (DEGGDSCSGC…VCQNCYYSLQ (61 aa)). Zn(2+) is bound by residues C3442, C3445, C3458, C3461, C3466, C3469, C3488, and C3491.

Directly interacts with ATG5 and associates with the ATG12-ATG5-ATG16L complex. Interacts with p62/SQSTM1. Directly interacts with GABARAP, GABARAPL1 and GABARAPL2; the interaction with GABARAP is required for WDFY3 recruitment to MAP1LC3B-positive p62/SQSTM1 bodies. Weakly interacts with MAP1LC3C; this interaction is direct. Does not interact with MAP1LC3A, nor MAP1LC3B. Interacts with TRAF6. As to expression, widely expressed, with high levels in the brain (at protein level). In the brain, expressed by both neuronal and non-neuronal cells. Expressed in bones, in the periosteum, cartilage, growth plate, trabeculae of the primary spongiosa, and scattered hematopoietic cells within the medullary cavity. Tends to be expressed at lower levels in the hypertrophic zone compared to trabeculae. Expressed in osteoblasts, osteoclasts and bone-marrow derived macrophages.

It is found in the nucleus. Its subcellular location is the cytoplasm. It localises to the cytosol. The protein localises to the PML body. The protein resides in the membrane. It is found in the perikaryon. Its subcellular location is the cell projection. It localises to the axon. In terms of biological role, required for selective macroautophagy (aggrephagy). Acts as an adapter protein by linking specific proteins destined for degradation to the core autophagic machinery members, such as the ATG5-ATG12-ATG16L E3-like ligase, SQSTM1 and LC3. Involved in the formation and autophagic degradation of cytoplasmic ubiquitin-containing inclusions (p62 bodies, ALIS/aggresome-like induced structures). Important for normal brain development. Essential for the formation of axonal tracts throughout the brain and spinal cord, including the formation of the major forebrain commissures. Involved in the ability of neural cells to respond to guidance cues. Required for cortical neurons to respond to the trophic effects of netrin-1/NTN1. Regulates Wnt signaling through the removal of DVL3 aggregates, likely in an autophagy-dependent manner. This process may be important for the determination of brain size during embryonic development. May regulate osteoclastogenesis by acting on the TNFSF11/RANKL - TRAF6 pathway. After cytokinetic abscission, involved in midbody remnant degradation. In vitro strongly binds to phosphatidylinositol 3-phosphate (PtdIns3P). This is WD repeat and FYVE domain-containing protein 3 (Wdfy3) from Mus musculus (Mouse).